The primary structure comprises 682 residues: Potassium-transporting ATPase ATP-binding subunit (682 aa).

A run of 4 helical transmembrane segments spans residues 34–54 (PVMFIVWIGSLLTTCICIAMA), 62–82 (ALFSAAISGWLWVTVLFANFA), 219–239 (IALTILLIALTIVFLLATATL), and 254–274 (VLVALLVCLIPTTIGGLLSAI). The 4-aspartylphosphate intermediate role is filled by aspartate 307. Residues aspartate 344, glutamate 348, 377 to 384 (FTAQSRMS), and lysine 395 contribute to the ATP site. 2 residues coordinate Mg(2+): aspartate 518 and aspartate 522. Transmembrane regions (helical) follow at residues 588-608 (FAIIPAAFAATYPQLNALNIM), 616-636 (AILSAVIFNALIIVFLIPLAL), and 656-676 (IYGLGGLLVPFIGIKVIDLLL).

The protein belongs to the cation transport ATPase (P-type) (TC 3.A.3) family. Type IA subfamily. The system is composed of three essential subunits: KdpA, KdpB and KdpC.

Its subcellular location is the cell inner membrane. The catalysed reaction is K(+)(out) + ATP + H2O = K(+)(in) + ADP + phosphate + H(+). Its function is as follows. Part of the high-affinity ATP-driven potassium transport (or Kdp) system, which catalyzes the hydrolysis of ATP coupled with the electrogenic transport of potassium into the cytoplasm. This subunit is responsible for energy coupling to the transport system and for the release of the potassium ions to the cytoplasm. This chain is Potassium-transporting ATPase ATP-binding subunit, found in Escherichia coli O17:K52:H18 (strain UMN026 / ExPEC).